Consider the following 368-residue polypeptide: Probable leucine aminopeptidase TRV_05750 (368 aa).

The N-terminal stretch at 1-18 is a signal peptide; that stretch reads MKVFAIAAVAALTAVAVA. N92 carries an N-linked (GlcNAc...) asparagine glycan. The Zn(2+) site is built by H172 and D191. N192 and N216 each carry an N-linked (GlcNAc...) asparagine glycan. Zn(2+)-binding residues include E230 and D257. Cysteines 301 and 305 form a disulfide. H334 lines the Zn(2+) pocket.

It belongs to the peptidase M28 family. M28E subfamily. Monomer. The cofactor is Zn(2+).

It is found in the secreted. In terms of biological role, probable extracellular aminopeptidase which contributes to pathogenicity. This Trichophyton verrucosum (strain HKI 0517) protein is Probable leucine aminopeptidase TRV_05750.